Here is a 121-residue protein sequence, read N- to C-terminus: Small ribosomal subunit protein uS13 (121 aa).

Residues 94-121 (GLPLRGQRTRTNARTRKGPRRAAQSLKK) form a disordered region.

The protein belongs to the universal ribosomal protein uS13 family. As to quaternary structure, part of the 30S ribosomal subunit. Forms a loose heterodimer with protein S19. Forms two bridges to the 50S subunit in the 70S ribosome.

In terms of biological role, located at the top of the head of the 30S subunit, it contacts several helices of the 16S rRNA. In the 70S ribosome it contacts the 23S rRNA (bridge B1a) and protein L5 of the 50S subunit (bridge B1b), connecting the 2 subunits; these bridges are implicated in subunit movement. Contacts the tRNAs in the A and P-sites. The chain is Small ribosomal subunit protein uS13 from Paraburkholderia phymatum (strain DSM 17167 / CIP 108236 / LMG 21445 / STM815) (Burkholderia phymatum).